Reading from the N-terminus, the 30-residue chain is Thrombin-like enzyme LmrSP-2 (30 aa).

The protein belongs to the peptidase S1 family. Snake venom subfamily. Expressed by the venom gland.

It is found in the secreted. Thrombin-like snake venom serine protease that cleaves alpha-chain of fibrinogen (FGA) releases only fibrinopeptide A. Shows coagulant, esterase and amidase activities. The polypeptide is Thrombin-like enzyme LmrSP-2 (Lachesis muta rhombeata (Bushmaster)).